Reading from the N-terminus, the 379-residue chain is Stimulator of interferon genes protein (379 aa).

The next 3 helical transmembrane spans lie at 20 to 40 (VAAF…GEPS), 87 to 107 (ACLG…YFYV), and 115 to 135 (LPLT…ILLG). S-palmitoyl cysteine attachment occurs at residues C88 and C91. A cyclic dinucleotide-binding domain (CBD) region spans residues 153–340 (FNVAHGLAWS…KHLRQEEREE (188 aa)). Positions 162, 167, 238, and 263 each coordinate 2',3'-cGAMP. 3',3'-c-di-GMP contacts are provided by residues S162, Y167, 238 to 241 (RVYT), and T263. Positions 167, 238, and 263 each coordinate 2',3'-cUAMP. A C-terminal tail (CTT) region spans residues 340-379 (EVTMGTAGTFVAPGSSTLHQEPELLISGMDQPLPLRTDIF). A Phosphoserine modification is found at S355. T356 bears the Phosphothreonine mark. Residues 363 to 366 (LLIS) carry the pLxIS motif motif. At S366 the chain carries Phosphoserine; by TBK1.

The protein belongs to the STING family. As to quaternary structure, homodimer; forms a homodimer in absence of cyclic nucleotide (c-di-GMP or cGAMP). Homotetramer; in presence of cyclic nucleotide (c-di-GMP or cGAMP), forms tetramers and higher-order oligomers through side-by-side packing. Interacts (when phosphorylated) with IRF3; following activation and phosphorylation on the pLxIS motif by TBK1, recruits IRF3. Interacts with TBK1; when homodimer, leading to subsequent production of IFN-beta. Interacts (via transmembrane domain) with TMEM203. Phosphorylation by TBK1 leads to activation and production of IFN-beta. Following cyclic nucleotide (c-di-GMP or cGAMP)-binding, activation and translocation from the endoplasmic reticulum, STING1 is phosphorylated by TBK1 at Ser-366 in the pLxIS motif. The phosphorylated pLxIS motif constitutes an IRF3-binding motif, leading to recruitment of the transcription factor IRF3 to induce type-I interferons and other cytokines. In contrast, lacks phosphorylation site at position 358, leading to reduced production of type-I interferons and other cytokines.

It is found in the endoplasmic reticulum membrane. The protein resides in the cytoplasm. Its subcellular location is the perinuclear region. It localises to the endoplasmic reticulum-Golgi intermediate compartment membrane. The protein localises to the golgi apparatus membrane. It is found in the cytoplasmic vesicle. The protein resides in the autophagosome membrane. Its subcellular location is the mitochondrion outer membrane. It localises to the cell membrane. It carries out the reaction H(+)(in) = H(+)(out). Functionally, facilitator of innate immune signaling that acts as a sensor of cytosolic DNA from bacteria and viruses and promotes low production of type I interferon (IFN-alpha and IFN-beta). Compared to other mammals, STING1-dependent type I interferon induction is strongly reduced in bats, suggesting that the cGAS-STING pathway promotes a limited inflammatory response. Innate immune response is triggered in response to non-CpG double-stranded DNA from viruses and bacteria delivered to the cytoplasm. Acts by binding cyclic dinucleotides: recognizes and binds cyclic di-GMP (c-di-GMP), a second messenger produced by bacteria, cyclic UMP-AMP (2',3'-cUAMP), and cyclic GMP-AMP (cGAMP), a messenger produced by CGAS in response to DNA virus in the cytosol. Upon binding to c-di-GMP, cUAMP or cGAMP, STING1 oligomerizes, translocates from the endoplasmic reticulum and is phosphorylated by TBK1 on the pLxIS motif, leading to recruitment and subsequent activation of the transcription factor IRF3 to induce expression of type I interferon and exert a potent anti-viral state. In addition to promote the production of type I interferons, plays a direct role in autophagy. Following cGAMP-binding, STING1 buds from the endoplasmic reticulum into COPII vesicles, which then form the endoplasmic reticulum-Golgi intermediate compartment (ERGIC). The ERGIC serves as the membrane source for WIPI2 recruitment and LC3 lipidation, leading to formation of autophagosomes that target cytosolic DNA or DNA viruses for degradation by the lysosome. Promotes autophagy by acting as a proton channel that directs proton efflux from the Golgi to facilitate MAP1LC3B/LC3B lipidation. The autophagy- and interferon-inducing activities can be uncoupled and autophagy induction is independent of TBK1 phosphorylation. This chain is Stimulator of interferon genes protein, found in Eidolon helvum (Straw-colored fruit bat).